The following is a 419-amino-acid chain: L-rhamnose isomerase (419 aa).

Mn(2+) is bound by residues H262, D294, and D296.

It belongs to the rhamnose isomerase family. Homotetramer. Mn(2+) is required as a cofactor.

The protein localises to the cytoplasm. It catalyses the reaction L-rhamnopyranose = L-rhamnulose. Its pathway is carbohydrate degradation; L-rhamnose degradation; glycerone phosphate from L-rhamnose: step 1/3. In terms of biological role, catalyzes the interconversion of L-rhamnose and L-rhamnulose. The polypeptide is L-rhamnose isomerase (Salmonella newport (strain SL254)).